A 487-amino-acid chain; its full sequence is UDP-N-acetylmuramate--L-alanine ligase (487 aa).

Residue glycine 126 to threonine 132 coordinates ATP.

It belongs to the MurCDEF family.

Its subcellular location is the cytoplasm. The catalysed reaction is UDP-N-acetyl-alpha-D-muramate + L-alanine + ATP = UDP-N-acetyl-alpha-D-muramoyl-L-alanine + ADP + phosphate + H(+). It participates in cell wall biogenesis; peptidoglycan biosynthesis. Its function is as follows. Cell wall formation. The protein is UDP-N-acetylmuramate--L-alanine ligase of Proteus mirabilis (strain HI4320).